The sequence spans 147 residues: Allograft inflammatory factor 1 (147 aa).

Position 2 is an N-acetylserine (Ser2). Residue Lys11 is modified to N6-acetyllysine. A Phosphoserine modification is found at Ser39. EF-hand domains lie at 45-80 and 81-115; these read SKLE…LGVP and KTHL…GKRS. Ca(2+) contacts are provided by Asp58, Asn60, Asn62, Asp64, Thr100, and Asp105. The disordered stretch occupies residues 128–147; sequence AREKEKPTGPPAKKAISELP.

Homodimer (Potential). Monomer. Interacts with LCP1. Phosphorylated on serine residues.

The protein resides in the cytoplasm. The protein localises to the cytoskeleton. It localises to the cell projection. It is found in the ruffle membrane. Its subcellular location is the phagocytic cup. Actin-binding protein that enhances membrane ruffling and RAC activation. Enhances the actin-bundling activity of LCP1. Binds calcium. Plays a role in RAC signaling and in phagocytosis. May play a role in macrophage activation and function. Promotes the proliferation of vascular smooth muscle cells and of T-lymphocytes. Enhances lymphocyte migration. Plays a role in vascular inflammation. The chain is Allograft inflammatory factor 1 (AIF1) from Macaca mulatta (Rhesus macaque).